Reading from the N-terminus, the 1685-residue chain is Myomesin-1 (1685 aa).

A disordered region spans residues 33 to 80 (KKRSAVYTQGSTAYSSRSSAAHRRESEAFRRASASSSQQQASQHALSS). Composition is skewed to low complexity over residues 41–51 (QGSTAYSSRSS) and 63–80 (RASA…ALSS). S113 is modified (phosphoserine). Positions 177–244 (GITTSKQSTA…TSEKKSRKVV (68 aa)) are disordered. The segment covering 179–220 (TTSKQSTASKQTTASKQSTASKQSTASKQSTASRQSTASRQS) has biased composition (low complexity). Tandem repeats lie at residues 182-187 (KQSTAS), 188-193 (KQTTAS), 194-199 (KQSTAS), 200-205 (KQSTAS), 206-211 (KQSTAS), and 212-217 (RQSTAS). The interval 182–217 (KQSTASKQTTASKQSTASKQSTASKQSTASRQSTAS) is 6 X 6 AA tandem repeats. A compositionally biased stretch (polar residues) spans 221–233 (VVSKQATSALQQE). 2 consecutive Ig-like C2-type domains span residues 277–368 (PEFI…ASVV) and 396–498 (PYGY…AYVF). 3 consecutive Fibronectin type-III domains span residues 512 to 607 (APLD…ALDP), 640 to 734 (PPTD…VVGD), and 741 to 834 (APGK…VKAA). Residues 840-938 (SPDVCPALSD…TDRAPPSPPC (99 aa)) form a disordered region. Over residues 874 to 888 (LLGSKPNKPSLPSSS) the composition is skewed to low complexity. A phosphoserine mark is found at S883 and S887. A compositionally biased stretch (polar residues) spans 889–902 (QNLGQTEVSKVSET). The span at 920 to 931 (SKSDPLKKKTDR) shows a compositional bias: basic and acidic residues. Fibronectin type-III domains lie at 933–1034 (PPSP…CEEW) and 1041–1140 (PPHS…TRPG). S1054 is modified (phosphoserine). Ig-like C2-type domains lie at 1132–1230 (PVVA…EELK), 1358–1444 (PHFV…LKLV), and 1573–1662 (RVLG…FTVS). A disulfide bridge links C1160 with C1210.

As to quaternary structure, homodimer. Interacts with TTN/titin. Interacts with PNKD.

The protein resides in the cytoplasm. Its subcellular location is the myofibril. The protein localises to the sarcomere. It localises to the m line. Functionally, major component of the vertebrate myofibrillar M band. Binds myosin, titin, and light meromyosin. This binding is dose dependent. The chain is Myomesin-1 (MYOM1) from Homo sapiens (Human).